A 389-amino-acid chain; its full sequence is MGKKAIQFGGGNIGRGFVAEFLHESGYEVVFIDVVPQVIESLNKNKSYEVTEISEEGEKTKTITNYRALSSKTQEPEVVKEIATADVVTCAVGPNILKFIAPVIAKGIDAREEGLPPIAVIACENAINATDALRGYIEEHLDKSRLDTLPKRARFANSAIDRIVPTQPEHAGLNVRIEKFYEWAVEQTPFGEYGHPDISAIHWVDHLEPYIERKLFTVNTGHATAAYYGYKAGKKTIHEAMAEETIHKAVHAALDETASLIISKHEITEQEQKEYVKTIISRISNPYLEDVVERVGRAPLRKLSRKERFIGPAAQLAERGMKFDALLGSIEKALQFQNVKGDDESTELAKILSEKTAAEATQQITGLETDHPLYQPVLKVVEKVQSVSK.

NAD(+) is bound at residue 5 to 16; sequence AIQFGGGNIGRG. The active site involves K214.

Belongs to the mannitol dehydrogenase family. In terms of assembly, monomer.

The enzyme catalyses D-mannitol 1-phosphate + NAD(+) = beta-D-fructose 6-phosphate + NADH + H(+). Functionally, catalyzes the NAD(H)-dependent interconversion of D-fructose 6-phosphate and D-mannitol 1-phosphate in the mannitol metabolic pathway. The chain is Mannitol-1-phosphate 5-dehydrogenase from Talaromyces marneffei (strain ATCC 18224 / CBS 334.59 / QM 7333) (Penicillium marneffei).